Reading from the N-terminus, the 141-residue chain is Putative pre-16S rRNA nuclease (141 aa).

Belongs to the YqgF nuclease family.

The protein resides in the cytoplasm. In terms of biological role, could be a nuclease involved in processing of the 5'-end of pre-16S rRNA. The protein is Putative pre-16S rRNA nuclease of Coxiella burnetii (strain RSA 331 / Henzerling II).